The following is a 567-amino-acid chain: Synaptotagmin-like protein 1 (567 aa).

Residues Leu-31–Ala-87 enclose the RabBD domain. The tract at residues Arg-103–Ser-255 is disordered. Ser-120 is modified (phosphoserine). Composition is skewed to acidic residues over residues Gly-122–Glu-135 and Gly-170–Ala-184. The segment covering Glu-208–Thr-219 has biased composition (polar residues). The residue at position 220 (Ser-220) is a Phosphoserine. Residues Ser-235–Ser-255 show a composition bias toward low complexity. C2 domains lie at Val-271–Leu-390 and Ser-403–Met-532.

In terms of assembly, monomer. Binds NCF2 and NRXN1. Binds RAB27A that has been activated by GTP-binding via its N-terminus. As to expression, highly expressed in lung. Detected at lower levels in spleen, liver and kidney, and at very low levels in heart, brain and skeletal muscle. Expressed in cytotoxic T-lymphocytes (CTL).

It localises to the endomembrane system. The protein resides in the cell membrane. Binds phosphatidylinositol 3,4,5-trisphosphate. May play a role in vesicle trafficking. Acts as a RAB27A effector protein and may play a role in cytotoxic granule exocytosis in lymphocytes. The protein is Synaptotagmin-like protein 1 (Sytl1) of Mus musculus (Mouse).